Consider the following 279-residue polypeptide: Large ribosomal subunit protein mL46 (279 aa).

An N6-acetyllysine modification is found at lysine 230.

It belongs to the mitochondrion-specific ribosomal protein mL46 family. Component of the mitochondrial ribosome large subunit (39S) which comprises a 16S rRNA and about 50 distinct proteins.

It is found in the mitochondrion. The sequence is that of Large ribosomal subunit protein mL46 (MRPL46) from Pongo abelii (Sumatran orangutan).